The primary structure comprises 526 residues: UDP-glycosyltransferase UGT5 (526 aa).

The Lumenal portion of the chain corresponds to 1–474 (MIFFYFLTLT…TAAVDMPWYQ (474 aa)). Residues Asn-49, Asn-124, and Asn-283 are each glycosylated (N-linked (GlcNAc...) asparagine). The helical transmembrane segment at 475–495 (YLLLDVIAFLIFILVSVILII) threads the bilayer. Residues 496–526 (YYGVKISLRYLCALIFGNSSSLKPTKKVKDN) are Cytoplasmic-facing.

Belongs to the UDP-glycosyltransferase family.

It localises to the microsome membrane. Functionally, catalyzes the transfer of a glycosyl group from a UDP-sugar to an acceptor molecule. This chain is UDP-glycosyltransferase UGT5, found in Dactylopius coccus (Cochineal).